The primary structure comprises 71 residues: Pro-MCH (71 aa).

Positions A1–G20 are cleaved as a signal peptide.

Belongs to the melanin-concentrating hormone family.

The protein localises to the secreted. This chain is Pro-MCH (PMCH), found in Pan paniscus (Pygmy chimpanzee).